Consider the following 227-residue polypeptide: Ribosomal RNA large subunit methyltransferase E (227 aa).

S-adenosyl-L-methionine contacts are provided by G78, W80, D103, D119, and D143. K183 (proton acceptor) is an active-site residue.

The protein belongs to the class I-like SAM-binding methyltransferase superfamily. RNA methyltransferase RlmE family.

The protein localises to the cytoplasm. The catalysed reaction is uridine(2552) in 23S rRNA + S-adenosyl-L-methionine = 2'-O-methyluridine(2552) in 23S rRNA + S-adenosyl-L-homocysteine + H(+). In terms of biological role, specifically methylates the uridine in position 2552 of 23S rRNA at the 2'-O position of the ribose in the fully assembled 50S ribosomal subunit. The polypeptide is Ribosomal RNA large subunit methyltransferase E (Rickettsia bellii (strain RML369-C)).